The primary structure comprises 175 residues: ATP-dependent protease subunit HslV (175 aa).

Thr-2 is a catalytic residue. Na(+)-binding residues include Gly-158, Cys-161, and Thr-164.

Belongs to the peptidase T1B family. HslV subfamily. A double ring-shaped homohexamer of HslV is capped on each side by a ring-shaped HslU homohexamer. The assembly of the HslU/HslV complex is dependent on binding of ATP.

Its subcellular location is the cytoplasm. The catalysed reaction is ATP-dependent cleavage of peptide bonds with broad specificity.. Allosterically activated by HslU binding. Its function is as follows. Protease subunit of a proteasome-like degradation complex believed to be a general protein degrading machinery. The protein is ATP-dependent protease subunit HslV of Haemophilus influenzae (strain 86-028NP).